Here is a 433-residue protein sequence, read N- to C-terminus: MSVTATPVNLTELAHRTRQAARDLAGLSPTARNQALEAVARSLENASDEILAANQTDCRLATETGLAPALYSRLKLDSTKLAGAIAGVRSVSQLADPIGAVQLQRELDTGLILKRMTCPLGVLGVIFEARPDAVVQISALAIKSGNGVLLKGGQEALHSCKALVAAIHQGLASAGLNPDSIALLTSREETLALLELDQQVDLIIPRGSNAFVRFVQEHTRIPVLGHAEGICHLYVDQTADLEQAVQIAIDAKTQYPAACNAIETLLVHRAIAPQFLPQLATALQALKVELRGDELTREIIPVAPAAESDWATEYSDLILSIKVVADLESAINHINTYGSRHTEAIVTADENAATTFLHEVDAAGVFHNCSTRFADGFRYGLGAEVGISTHKLPPRGPVGLEGLVTYKYQLVGQGQVVSTYSGPSAKPFTHRDL.

Belongs to the gamma-glutamyl phosphate reductase family.

It is found in the cytoplasm. It carries out the reaction L-glutamate 5-semialdehyde + phosphate + NADP(+) = L-glutamyl 5-phosphate + NADPH + H(+). Its pathway is amino-acid biosynthesis; L-proline biosynthesis; L-glutamate 5-semialdehyde from L-glutamate: step 2/2. In terms of biological role, catalyzes the NADPH-dependent reduction of L-glutamate 5-phosphate into L-glutamate 5-semialdehyde and phosphate. The product spontaneously undergoes cyclization to form 1-pyrroline-5-carboxylate. The sequence is that of Gamma-glutamyl phosphate reductase from Cyanothece sp. (strain PCC 7425 / ATCC 29141).